The chain runs to 141 residues: Putative pre-16S rRNA nuclease (141 aa).

The protein belongs to the YqgF nuclease family.

The protein resides in the cytoplasm. In terms of biological role, could be a nuclease involved in processing of the 5'-end of pre-16S rRNA. The protein is Putative pre-16S rRNA nuclease of Natranaerobius thermophilus (strain ATCC BAA-1301 / DSM 18059 / JW/NM-WN-LF).